The primary structure comprises 487 residues: uncharacterized protein (487 aa).

This sequence belongs to the UbiD family.

This is an uncharacterized protein from Aeropyrum pernix (strain ATCC 700893 / DSM 11879 / JCM 9820 / NBRC 100138 / K1).